We begin with the raw amino-acid sequence, 107 residues long: Phosphoribosyl-ATP pyrophosphatase (107 aa).

The protein belongs to the PRA-PH family.

It localises to the cytoplasm. It catalyses the reaction 1-(5-phospho-beta-D-ribosyl)-ATP + H2O = 1-(5-phospho-beta-D-ribosyl)-5'-AMP + diphosphate + H(+). It participates in amino-acid biosynthesis; L-histidine biosynthesis; L-histidine from 5-phospho-alpha-D-ribose 1-diphosphate: step 2/9. This Bacillus thuringiensis (strain Al Hakam) protein is Phosphoribosyl-ATP pyrophosphatase.